A 170-amino-acid polypeptide reads, in one-letter code: Adenine phosphoribosyltransferase (170 aa).

Belongs to the purine/pyrimidine phosphoribosyltransferase family. Homodimer.

It is found in the cytoplasm. It catalyses the reaction AMP + diphosphate = 5-phospho-alpha-D-ribose 1-diphosphate + adenine. Its pathway is purine metabolism; AMP biosynthesis via salvage pathway; AMP from adenine: step 1/1. Catalyzes a salvage reaction resulting in the formation of AMP, that is energically less costly than de novo synthesis. This Pseudothermotoga lettingae (strain ATCC BAA-301 / DSM 14385 / NBRC 107922 / TMO) (Thermotoga lettingae) protein is Adenine phosphoribosyltransferase.